We begin with the raw amino-acid sequence, 586 residues long: Proline--tRNA ligase (586 aa).

The protein belongs to the class-II aminoacyl-tRNA synthetase family. ProS type 1 subfamily. In terms of assembly, homodimer.

It localises to the cytoplasm. It catalyses the reaction tRNA(Pro) + L-proline + ATP = L-prolyl-tRNA(Pro) + AMP + diphosphate. Functionally, catalyzes the attachment of proline to tRNA(Pro) in a two-step reaction: proline is first activated by ATP to form Pro-AMP and then transferred to the acceptor end of tRNA(Pro). As ProRS can inadvertently accommodate and process non-cognate amino acids such as alanine and cysteine, to avoid such errors it has two additional distinct editing activities against alanine. One activity is designated as 'pretransfer' editing and involves the tRNA(Pro)-independent hydrolysis of activated Ala-AMP. The other activity is designated 'posttransfer' editing and involves deacylation of mischarged Ala-tRNA(Pro). The misacylated Cys-tRNA(Pro) is not edited by ProRS. The chain is Proline--tRNA ligase from Kineococcus radiotolerans (strain ATCC BAA-149 / DSM 14245 / SRS30216).